The following is a 434-amino-acid chain: Mitochondrial distribution and morphology protein 12 (434 aa).

The region spanning 1-434 (MSIDIDWERA…VYPSFWTFLV (434 aa)) is the SMP-LTD domain. Residues 70-83 (YEEDDNENFSESSE) show a composition bias toward acidic residues. Disordered regions lie at residues 70–141 (YEED…LRSP) and 181–275 (TPLG…DDLP). Over residues 86–97 (SPTREPVDRYGS) the composition is skewed to basic and acidic residues. The segment covering 215–237 (SAQSRPSTANTGNTLLSRGSMSS) has biased composition (polar residues).

This sequence belongs to the MDM12 family. In terms of assembly, component of the ER-mitochondria encounter structure (ERMES) or MDM complex, composed of MMM1, MDM10, MDM12 and MDM34. An MMM1 homodimer associates with one molecule of MDM12 on each side in a pairwise head-to-tail manner, and the SMP-LTD domains of MMM1 and MDM12 generate a continuous hydrophobic tunnel for phospholipid trafficking.

It is found in the mitochondrion outer membrane. The protein resides in the endoplasmic reticulum membrane. In terms of biological role, component of the ERMES/MDM complex, which serves as a molecular tether to connect the endoplasmic reticulum (ER) and mitochondria. Components of this complex are involved in the control of mitochondrial shape and protein biogenesis, and function in nonvesicular lipid trafficking between the ER and mitochondria. MDM12 is required for the interaction of the ER-resident membrane protein MMM1 and the outer mitochondrial membrane-resident beta-barrel protein MDM10. The MDM12-MMM1 subcomplex functions in the major beta-barrel assembly pathway that is responsible for biogenesis of all mitochondrial outer membrane beta-barrel proteins, and acts in a late step after the SAM complex. The MDM10-MDM12-MMM1 subcomplex further acts in the TOM40-specific pathway after the action of the MDM12-MMM1 complex. Essential for establishing and maintaining the structure of mitochondria and maintenance of mtDNA nucleoids. This Blastomyces gilchristii (strain SLH14081) (Blastomyces dermatitidis) protein is Mitochondrial distribution and morphology protein 12.